We begin with the raw amino-acid sequence, 89 residues long: Small ribosomal subunit protein uS19 (89 aa).

This sequence belongs to the universal ribosomal protein uS19 family.

Its function is as follows. Protein S19 forms a complex with S13 that binds strongly to the 16S ribosomal RNA. The chain is Small ribosomal subunit protein uS19 from Bacteroides fragilis (strain YCH46).